The chain runs to 75 residues: MNKLAILAIIAMVLFSANAFRFQSRIRSNVEAKTETRDLCEQSALQCNEQGCHNFCSPEDKPGCLGMVWNPELCP.

A signal peptide spans 1 to 19; it reads MNKLAILAIIAMVLFSANA. A propeptide spanning residues 20–37 is cleaved from the precursor; that stretch reads FRFQSRIRSNVEAKTETR. Disulfide bonds link Cys40–Cys56, Cys47–Cys74, and Cys52–Cys64.

As to quaternary structure, homodimer.

The protein localises to the secreted. Mating ciliate pheromones (or gamones) are diffusible extracellular communication signals that distinguish different intraspecific classes of cells commonly referred to as 'mating types'. They prepare the latter for conjugation by changing their cell surface properties. In Euplotes raikovi, this protein is Mating pheromone Er-10 (MAT10).